The primary structure comprises 178 residues: Protein GrpE (178 aa).

The protein belongs to the GrpE family. In terms of assembly, homodimer.

It localises to the cytoplasm. Its function is as follows. Participates actively in the response to hyperosmotic and heat shock by preventing the aggregation of stress-denatured proteins, in association with DnaK and GrpE. It is the nucleotide exchange factor for DnaK and may function as a thermosensor. Unfolded proteins bind initially to DnaJ; upon interaction with the DnaJ-bound protein, DnaK hydrolyzes its bound ATP, resulting in the formation of a stable complex. GrpE releases ADP from DnaK; ATP binding to DnaK triggers the release of the substrate protein, thus completing the reaction cycle. Several rounds of ATP-dependent interactions between DnaJ, DnaK and GrpE are required for fully efficient folding. This Rickettsia prowazekii (strain Madrid E) protein is Protein GrpE.